A 616-amino-acid polypeptide reads, in one-letter code: Spastin (616 aa).

The tract at residues 1–43 is disordered; that stretch reads MNSPGGRGKKKGSGGASNPVPPRPPPPCLAPAPPAAGPAPPPE. The segment at 1–50 is required for nuclear localization; it reads MNSPGGRGKKKGSGGASNPVPPRPPPPCLAPAPPAAGPAPPPESPHKRNL. Residues 1 to 56 are Cytoplasmic-facing; the sequence is MNSPGGRGKKKGSGGASNPVPPRPPPPCLAPAPPAAGPAPPPESPHKRNLYYFSYP. The segment at 1–80 is required for interaction with ATL1; sequence MNSPGGRGKK…LGLLFVWLCQ (80 aa). A required for midbody localization region spans residues 1 to 194; that stretch reads MNSPGGRGKK…LVMAKDRLQL (194 aa). Residues 1 to 300 form a required for interaction with RTN1 region; sequence MNSPGGRGKK…GTPKTNRTNK (300 aa). The short motif at 4-11 is the Nuclear localization signal element; it reads PGGRGKKK. Positions 19–43 are enriched in pro residues; it reads PVPPRPPPPCLAPAPPAAGPAPPPE. Residues 50-87 form a required for interaction with SSNA1 and microtubules region; sequence LYYFSYPLFVGFALLRLVAFHLGLLFVWLCQRFSRALM. An intramembrane region (helical) is located at residues 57 to 77; that stretch reads LFVGFALLRLVAFHLGLLFVW. The Nuclear export signal signature appears at 59–67; the sequence is VGFALLRLV. Residues 78–616 are Cytoplasmic-facing; the sequence is LCQRFSRALM…WNKDFGDTTV (539 aa). A sufficient for interaction with CHMP1B region spans residues 112–196; it reads EAERVRVFHK…MAKDRLQLLE (85 aa). Positions 114–200 are required for interaction with microtubules; it reads ERVRVFHKQA…RLQLLEKMQP (87 aa). Positions 120–195 constitute an MIT domain; it reads HKQAFEYISI…VMAKDRLQLL (76 aa). Residues 224 to 266 form a disordered region; it reads HLQSESGAVPKRKDPLTHTSNSLPRSKTVMKTGSAGLSGHHRA. The interval 228-616 is sufficient for microtubule severing; that stretch reads ESGAVPKRKD…WNKDFGDTTV (389 aa). Polar residues predominate over residues 240–254; that stretch reads THTSNSLPRSKTVMK. A phosphoserine mark is found at serine 245 and serine 268. The required for interaction with microtubules and microtubule severing stretch occupies residues 270–328; sequence SGLSMVSGVKQGSGPAPTTHKGTPKTNRTNKPSTPTTATRKKKDLKNFRNVDSNLANLI. The segment at 278 to 312 is disordered; the sequence is VKQGSGPAPTTHKGTPKTNRTNKPSTPTTATRKKK. The span at 289–307 shows a compositional bias: polar residues; sequence HKGTPKTNRTNKPSTPTTA. At threonine 306 the chain carries Phosphothreonine. A Nuclear localization signal motif is present at residues 309-312; that stretch reads RKKK. Positions 310–312 are required for interaction with microtubules; that stretch reads KKK. 382-389 is a binding site for ATP; the sequence is GPPGNGKT. Phosphoserine is present on serine 597.

It belongs to the AAA ATPase family. Spastin subfamily. As to quaternary structure, homohexamer. Mostly monomeric, but assembles into hexameric structure for short periods of time. Oligomerization seems to be a prerequisite for catalytic activity. Binding to ATP in a cleft between two adjacent subunits stabilizes the homohexameric form. Binds to microtubules at least in part via the alpha-tubulin and beta-tubulin tails. The hexamer adopts a ring conformation through which microtubules pass prior to being severed. Does not interact strongly with tubulin heterodimers. Interacts (via MIT domain) with CHMP1B; the interaction is direct. Interacts with SSNA1. Interacts with ATL1. Interacts with RTN1. Interacts with ZFYVE27. Isoform 1 but not isoform 3 interacts with RTN2. Interacts with REEP1. Interacts (via MIT domain) with IST1. As to expression, expressed in brain, heart, kidney, liver, lung, pancreas, placenta and skeletal muscle. The short isoforms may predominate in brain and spinal cord.

It localises to the membrane. It is found in the endoplasmic reticulum. The protein resides in the midbody. Its subcellular location is the cytoplasm. The protein localises to the cytoskeleton. It localises to the microtubule organizing center. It is found in the centrosome. The protein resides in the perinuclear region. Its subcellular location is the nucleus. The protein localises to the spindle. It localises to the cell projection. It is found in the axon. The protein resides in the endoplasmic reticulum membrane. Its subcellular location is the nucleus membrane. The protein localises to the lipid droplet. It localises to the endosome. The catalysed reaction is n ATP + n H2O + a microtubule = n ADP + n phosphate + (n+1) alpha/beta tubulin heterodimers.. Allosteric enzyme with a cooperative mechanism; at least two neighbor subunits influence each other strongly in spastin hexamers. Microtubule binding promotes cooperative interactions among spastin subunits. ATP-bound enzyme interacts strongly and cooperatively with microtubules; this interaction stimulates ATP hydrolysis. ATP-dependent microtubule severing protein that specifically recognizes and cuts microtubules that are polyglutamylated. Preferentially recognizes and acts on microtubules decorated with short polyglutamate tails: severing activity increases as the number of glutamates per tubulin rises from one to eight, but decreases beyond this glutamylation threshold. Severing activity is not dependent on tubulin acetylation or detyrosination. Microtubule severing promotes reorganization of cellular microtubule arrays and the release of microtubules from the centrosome following nucleation. It is critical for the biogenesis and maintenance of complex microtubule arrays in axons, spindles and cilia. SPAST is involved in abscission step of cytokinesis and nuclear envelope reassembly during anaphase in cooperation with the ESCRT-III complex. Recruited at the midbody, probably by IST1, and participates in membrane fission during abscission together with the ESCRT-III complex. Recruited to the nuclear membrane by IST1 and mediates microtubule severing, promoting nuclear envelope sealing and mitotic spindle disassembly during late anaphase. Required for membrane traffic from the endoplasmic reticulum (ER) to the Golgi and endosome recycling. Recruited by IST1 to endosomes and regulates early endosomal tubulation and recycling by mediating microtubule severing. Probably plays a role in axon growth and the formation of axonal branches. In terms of biological role, involved in lipid metabolism by regulating the size and distribution of lipid droplets. This is Spastin from Homo sapiens (Human).